Consider the following 508-residue polypeptide: MSGDDDWWTSSNEALLVSLVTPSDTGVKTLDTFHPEYTNNIFGEKEQIFGYKGLRINLQYNASDMLPNLKVSYKKKYQPTADEEALDINEVLSEFLPEIAFQKQSDFETRLKSIPDNWTPPGTLVTSFTNKDGEYEVYSGKITDPAVKQLLNRIQILVPFFVDGGTPIDMEDPDVDRWTIYFLYNKRPLLNQPDKFSYHFAGYSTLYRYYAFQPPAESESKTPTDTPTFSVDGDFDLDTLPCRTRISQFIIIPPFQQKGLGSRLYSIIYQQYLKHEPTIELTVEDPNEAFDDMRDLADLAFLSKQPEFQALKIDTSVEIPEEGKAPSNIVDQAAWEACRKKFKIVPRQFARVLEMYLMSQLPESVRPGLGAPEDEDYEEQSGRSKSKGHEKALPKPTPEDEHTYRLWMMLVKRRLYVHNRDALGQLELKERREELAKVFAGVEFDYARLLIKAEEQGKLAQADGETAGDQVPATPSAANGKRKLDEVEQAEGTAAASSKKAKVESGHA.

Interaction with histone H4 N-terminus stretches follow at residues 44–46 (EKE) and 207–209 (YRY). Acetyl-CoA-binding positions include 249-251 (FII) and 256-262 (QQKGLGS). The Proton donor/acceptor role is filled by glutamate 284. Disordered stretches follow at residues 364 to 399 (SVRP…PTPE) and 461 to 508 (QADG…SGHA). Residues 387-399 (KGHEKALPKPTPE) show a composition bias toward basic and acidic residues.

Belongs to the HAT1 family. Component of the HAT-B complex composed of at least hat-1 and hat-2. The HAT-B complex binds to histone H4 tail.

It is found in the cytoplasm. It localises to the nucleus. It catalyses the reaction L-lysyl-[protein] + acetyl-CoA = N(6)-acetyl-L-lysyl-[protein] + CoA + H(+). Catalytic component of the histone acetylase B (HAT-B) complex. Acetylates 'Lys-12' of histone H4 which is required for telomeric silencing. Has intrinsic substrate specificity that modifies lysine in recognition sequence GXGKXG. Involved in DNA double-strand break repair. This is Histone acetyltransferase type B catalytic subunit (hat-1) from Neurospora crassa (strain ATCC 24698 / 74-OR23-1A / CBS 708.71 / DSM 1257 / FGSC 987).